A 353-amino-acid polypeptide reads, in one-letter code: Photosystem II D2 protein (353 aa).

T2 carries the post-translational modification N-acetylthreonine. T2 carries the phosphothreonine modification. A helical transmembrane segment spans residues 41 to 61; sequence CAYFALGGWFTGTTFVTSWYT. Chlorophyll a is bound at residue H118. The helical transmembrane segment at 125 to 141 threads the bilayer; it reads GFMLRQFELARSVQLRP. Pheophytin a-binding residues include Q130 and N143. A helical transmembrane segment spans residues 153 to 166; it reads VFVSVFLIYPLGQS. H198 contributes to the chlorophyll a binding site. A helical membrane pass occupies residues 208–228; it reads AALLCAIHGATVENTLFEDGD. Positions 215 and 262 each coordinate a plastoquinone. H215 serves as a coordination point for Fe cation. H269 contacts Fe cation. The helical transmembrane segment at 279–295 threads the bilayer; it reads GLWMSAIGVVGLALNLR.

Belongs to the reaction center PufL/M/PsbA/D family. PSII is composed of 1 copy each of membrane proteins PsbA, PsbB, PsbC, PsbD, PsbE, PsbF, PsbH, PsbI, PsbJ, PsbK, PsbL, PsbM, PsbT, PsbX, PsbY, PsbZ, Psb30/Ycf12, at least 3 peripheral proteins of the oxygen-evolving complex and a large number of cofactors. It forms dimeric complexes. The D1/D2 heterodimer binds P680, chlorophylls that are the primary electron donor of PSII, and subsequent electron acceptors. It shares a non-heme iron and each subunit binds pheophytin, quinone, additional chlorophylls, carotenoids and lipids. There is also a Cl(-1) ion associated with D1 and D2, which is required for oxygen evolution. The PSII complex binds additional chlorophylls, carotenoids and specific lipids. serves as cofactor. In terms of processing, phosphorylated on threonine residue(s); phosphorylation increases with increasing light levels.

Its subcellular location is the plastid. It localises to the chloroplast thylakoid membrane. The enzyme catalyses 2 a plastoquinone + 4 hnu + 2 H2O = 2 a plastoquinol + O2. Photosystem II (PSII) is a light-driven water:plastoquinone oxidoreductase that uses light energy to abstract electrons from H(2)O, generating O(2) and a proton gradient subsequently used for ATP formation. It consists of a core antenna complex that captures photons, and an electron transfer chain that converts photonic excitation into a charge separation. The D1/D2 (PsbA/PsbD) reaction center heterodimer binds P680, the primary electron donor of PSII as well as several subsequent electron acceptors. D2 is needed for assembly of a stable PSII complex. This is Photosystem II D2 protein from Marchantia polymorpha (Common liverwort).